Consider the following 192-residue polypeptide: Probable nicotinate-nucleotide adenylyltransferase (192 aa).

This sequence belongs to the NadD family.

It catalyses the reaction nicotinate beta-D-ribonucleotide + ATP + H(+) = deamido-NAD(+) + diphosphate. It participates in cofactor biosynthesis; NAD(+) biosynthesis; deamido-NAD(+) from nicotinate D-ribonucleotide: step 1/1. Its function is as follows. Catalyzes the reversible adenylation of nicotinate mononucleotide (NaMN) to nicotinic acid adenine dinucleotide (NaAD). The protein is Probable nicotinate-nucleotide adenylyltransferase of Shouchella clausii (strain KSM-K16) (Alkalihalobacillus clausii).